Reading from the N-terminus, the 426-residue chain is Diaminobutyrate--2-oxoglutarate transaminase (426 aa).

Lys274 is subject to N6-(pyridoxal phosphate)lysine.

Belongs to the class-III pyridoxal-phosphate-dependent aminotransferase family. Pyridoxal 5'-phosphate serves as cofactor.

It catalyses the reaction L-2,4-diaminobutanoate + 2-oxoglutarate = L-aspartate 4-semialdehyde + L-glutamate. It participates in amine and polyamine biosynthesis; ectoine biosynthesis; L-ectoine from L-aspartate 4-semialdehyde: step 1/3. Its function is as follows. Catalyzes reversively the conversion of L-aspartate beta-semialdehyde (ASA) to L-2,4-diaminobutyrate (DABA) by transamination with L-glutamate. This chain is Diaminobutyrate--2-oxoglutarate transaminase (ectB), found in Oceanobacillus iheyensis (strain DSM 14371 / CIP 107618 / JCM 11309 / KCTC 3954 / HTE831).